A 388-amino-acid chain; its full sequence is Succinate--CoA ligase [ADP-forming] subunit beta (388 aa).

Residues 9-244 (KEILRKFGVA…LDEEDPAEIE (236 aa)) form the ATP-grasp domain. Residues lysine 46, 53–55 (GRG), glutamate 99, alanine 102, and glutamate 107 each bind ATP. Residues asparagine 199 and aspartate 213 each contribute to the Mg(2+) site. Substrate contacts are provided by residues asparagine 264 and 321–323 (GIM).

Belongs to the succinate/malate CoA ligase beta subunit family. In terms of assembly, heterotetramer of two alpha and two beta subunits. Mg(2+) serves as cofactor.

It carries out the reaction succinate + ATP + CoA = succinyl-CoA + ADP + phosphate. The catalysed reaction is GTP + succinate + CoA = succinyl-CoA + GDP + phosphate. It participates in carbohydrate metabolism; tricarboxylic acid cycle; succinate from succinyl-CoA (ligase route): step 1/1. Its function is as follows. Succinyl-CoA synthetase functions in the citric acid cycle (TCA), coupling the hydrolysis of succinyl-CoA to the synthesis of either ATP or GTP and thus represents the only step of substrate-level phosphorylation in the TCA. The beta subunit provides nucleotide specificity of the enzyme and binds the substrate succinate, while the binding sites for coenzyme A and phosphate are found in the alpha subunit. The protein is Succinate--CoA ligase [ADP-forming] subunit beta of Burkholderia multivorans (strain ATCC 17616 / 249).